Here is a 212-residue protein sequence, read N- to C-terminus: Large ribosomal subunit protein uL3 (212 aa).

Residues 130–155 form a disordered region; the sequence is KRGNMTHGSKNHRLPGSTGAGTTPGR.

The protein belongs to the universal ribosomal protein uL3 family. As to quaternary structure, part of the 50S ribosomal subunit. Forms a cluster with proteins L14 and L19.

In terms of biological role, one of the primary rRNA binding proteins, it binds directly near the 3'-end of the 23S rRNA, where it nucleates assembly of the 50S subunit. The sequence is that of Large ribosomal subunit protein uL3 from Rippkaea orientalis (strain PCC 8801 / RF-1) (Cyanothece sp. (strain PCC 8801)).